A 220-amino-acid chain; its full sequence is Ribosomal RNA small subunit methyltransferase G 1 (220 aa).

Residues Gly79, Phe84, and Arg150 each coordinate S-adenosyl-L-methionine.

It belongs to the methyltransferase superfamily. RNA methyltransferase RsmG family.

It is found in the cytoplasm. The enzyme catalyses guanosine(527) in 16S rRNA + S-adenosyl-L-methionine = N(7)-methylguanosine(527) in 16S rRNA + S-adenosyl-L-homocysteine. Its function is as follows. Specifically methylates the N7 position of guanine in position 527 of 16S rRNA. This chain is Ribosomal RNA small subunit methyltransferase G 1, found in Syntrophobacter fumaroxidans (strain DSM 10017 / MPOB).